The primary structure comprises 155 residues: Protein SprT-like (155 aa).

In terms of domain architecture, SprT-like spans 7 to 144 (QRHMEEVSLQ…CGSCGGKLKQ (138 aa)). Position 67 (H67) interacts with Zn(2+). The active site involves E68. Zn(2+) is bound at residue H71.

The protein belongs to the SprT family. Zn(2+) is required as a cofactor.

The protein localises to the cytoplasm. This Listeria welshimeri serovar 6b (strain ATCC 35897 / DSM 20650 / CCUG 15529 / CIP 8149 / NCTC 11857 / SLCC 5334 / V8) protein is Protein SprT-like.